A 156-amino-acid chain; its full sequence is 3-dehydroquinate dehydratase (156 aa).

Tyr31 serves as the catalytic Proton acceptor. Substrate-binding residues include Asn83, His89, and Asp96. His109 functions as the Proton donor in the catalytic mechanism. Substrate contacts are provided by residues 110 to 111 and Arg120; that span reads LS.

Belongs to the type-II 3-dehydroquinase family. As to quaternary structure, homododecamer.

It catalyses the reaction 3-dehydroquinate = 3-dehydroshikimate + H2O. Its pathway is metabolic intermediate biosynthesis; chorismate biosynthesis; chorismate from D-erythrose 4-phosphate and phosphoenolpyruvate: step 3/7. In terms of biological role, catalyzes a trans-dehydration via an enolate intermediate. The protein is 3-dehydroquinate dehydratase of Chromobacterium violaceum (strain ATCC 12472 / DSM 30191 / JCM 1249 / CCUG 213 / NBRC 12614 / NCIMB 9131 / NCTC 9757 / MK).